A 523-amino-acid polypeptide reads, in one-letter code: 2-isopropylmalate synthase (523 aa).

Residues 5–267 (VIIFDTTLRD…HTAINHQEIW (263 aa)) form the Pyruvate carboxyltransferase domain. Residues Asp-14, His-202, His-204, and Asn-238 each coordinate Mn(2+). A regulatory domain region spans residues 392-523 (RLDYFSVQSG…QHNENNKETV (132 aa)).

This sequence belongs to the alpha-IPM synthase/homocitrate synthase family. LeuA type 1 subfamily. In terms of assembly, homodimer. Mn(2+) serves as cofactor.

It is found in the cytoplasm. It carries out the reaction 3-methyl-2-oxobutanoate + acetyl-CoA + H2O = (2S)-2-isopropylmalate + CoA + H(+). It participates in amino-acid biosynthesis; L-leucine biosynthesis; L-leucine from 3-methyl-2-oxobutanoate: step 1/4. Functionally, catalyzes the condensation of the acetyl group of acetyl-CoA with 3-methyl-2-oxobutanoate (2-ketoisovalerate) to form 3-carboxy-3-hydroxy-4-methylpentanoate (2-isopropylmalate). The protein is 2-isopropylmalate synthase of Escherichia coli O157:H7.